A 193-amino-acid polypeptide reads, in one-letter code: Ion-translocating oxidoreductase complex subunit B (193 aa).

The tract at residues 1–26 (MSTMLIAVILLTLLALFFGVLLGFAA) is hydrophobic. The region spanning 32 to 90 (EGNPIVDELEAILPQTQCGQCGYPGCRPYAEAIANGDKVNKCPPGGTATMEKLASLMGV) is the 4Fe-4S domain. The [4Fe-4S] cluster site is built by cysteine 49, cysteine 52, cysteine 57, cysteine 73, cysteine 114, cysteine 117, cysteine 120, cysteine 124, cysteine 144, cysteine 147, cysteine 150, and cysteine 154. 4Fe-4S ferredoxin-type domains lie at 105 to 134 (KVAYIREDECIGCTKCIQACPVDAIIGAGK) and 136 to 164 (MHTVLTADCTGCDLCVEPCPVDCIDMLPV).

It belongs to the 4Fe4S bacterial-type ferredoxin family. RnfB subfamily. As to quaternary structure, the complex is composed of six subunits: RnfA, RnfB, RnfC, RnfD, RnfE and RnfG. [4Fe-4S] cluster is required as a cofactor.

The protein localises to the cell inner membrane. Its function is as follows. Part of a membrane-bound complex that couples electron transfer with translocation of ions across the membrane. This chain is Ion-translocating oxidoreductase complex subunit B, found in Shewanella sp. (strain MR-4).